The following is a 666-amino-acid chain: Semaphorin-7A (666 aa).

The disordered stretch occupies residues 1–21 (MTPPPPGRAAPSAPRARVPGP). A signal peptide spans 1–44 (MTPPPPGRAAPSAPRARVPGPPARLGLPLRLRLLLLLWAAAASA). Residues 9 to 21 (AAPSAPRARVPGP) show a composition bias toward low complexity. Positions 53 to 490 (RIFAVWKGHV…SQWEVSQVPL (438 aa)) constitute a Sema domain. An N-linked (GlcNAc...) asparagine glycan is attached at Asn-105. A disulfide bridge connects residues Cys-120 and Cys-126. Arg-135 carries the post-translational modification Asymmetric dimethylarginine. Cys-143 and Cys-152 are disulfide-bonded. 2 N-linked (GlcNAc...) asparagine glycosylation sites follow: Asn-157 and Asn-258. 7 disulfide bridges follow: Cys-266–Cys-366, Cys-291–Cys-335, Cys-493–Cys-511, Cys-500–Cys-541, Cys-503–Cys-518, Cys-566–Cys-613, and Cys-587–Cys-596. Residues 267-269 (RGD) form an interaction with integrins region. The Cell attachment site motif lies at 267-269 (RGD). The N-linked (GlcNAc...) asparagine glycan is linked to Asn-330. The 86-residue stretch at 544-629 (PKPDKAPLQK…YFREAQHWQL (86 aa)) folds into the Ig-like C2-type domain. N-linked (GlcNAc...) asparagine glycosylation occurs at Asn-602. The GPI-anchor amidated alanine moiety is linked to residue Ala-648. The propeptide at 649–666 (ASLWLGVLPTLTLGLLVH) is removed in mature form.

The protein belongs to the semaphorin family. As to quaternary structure, interacts with ITGA1 and ITGB1. Interacts with PLXNC1. In terms of tissue distribution, detected in skin keratinocytes and on endothelial cells from skin blood vessels (at protein level). Expressed in fibroblasts, keratinocytes, melanocytes, placenta, testis, ovary, spleen, brain, spinal cord, lung, heart, adrenal gland, lymph nodes, thymus, intestine and kidney.

It localises to the cell membrane. Its function is as follows. Plays an important role in integrin-mediated signaling and functions both in regulating cell migration and immune responses. Promotes formation of focal adhesion complexes, activation of the protein kinase PTK2/FAK1 and subsequent phosphorylation of MAPK1 and MAPK3. Promotes production of pro-inflammatory cytokines by monocytes and macrophages. Plays an important role in modulating inflammation and T-cell-mediated immune responses. Promotes axon growth in the embryonic olfactory bulb. Promotes attachment, spreading and dendrite outgrowth in melanocytes. This Homo sapiens (Human) protein is Semaphorin-7A (SEMA7A).